The sequence spans 482 residues: UDP-N-acetylmuramate--L-alanine ligase (482 aa).

123–129 (GTHGKTT) is an ATP binding site.

This sequence belongs to the MurCDEF family.

It localises to the cytoplasm. It carries out the reaction UDP-N-acetyl-alpha-D-muramate + L-alanine + ATP = UDP-N-acetyl-alpha-D-muramoyl-L-alanine + ADP + phosphate + H(+). It participates in cell wall biogenesis; peptidoglycan biosynthesis. Its function is as follows. Cell wall formation. The sequence is that of UDP-N-acetylmuramate--L-alanine ligase from Pseudomonas putida (strain GB-1).